Reading from the N-terminus, the 291-residue chain is MNLFRFCSGLKVLGYFMILLVVAVVGVSYYAVVVSTWWPILIRGDHGALSALAALIIFVFHFLLIMLLWSYFTTVFTDPGSVPEHFRREMGGGDSLEAGTSTDQGAFGSLGYCTKCRNVKPPRCHHCSVCQRCVLKMDHHCVWIVNCVGARNYKFFLLFLFYTFLETMLDVIVLLPSFIEFFSQAIKHSSSPGKLASLVLAFVLNFAFVLSLLCFVVMHISLLSSNTTSVEVHEKNGEVRWKYDLGKKKNFEQVFGKKKAFWLLPLYSKDDIDNITSLEGLEFPTCSDIDP.

A run of 2 helical transmembrane segments spans residues G14–V34 and L49–W69. The region spanning G111–F161 is the DHHC domain. The active-site S-palmitoyl cysteine intermediate is the C141. 2 consecutive transmembrane segments (helical) span residues F155 to L175 and L198 to M218.

Belongs to the DHHC palmitoyltransferase family.

The protein localises to the cell membrane. The catalysed reaction is L-cysteinyl-[protein] + hexadecanoyl-CoA = S-hexadecanoyl-L-cysteinyl-[protein] + CoA. Its function is as follows. Palmitoyl acyltransferase. In Arabidopsis thaliana (Mouse-ear cress), this protein is Probable protein S-acyltransferase 12 (PAT12).